The following is a 184-amino-acid chain: Probable chemoreceptor glutamine deamidase CheD (184 aa).

The protein belongs to the CheD family.

It catalyses the reaction L-glutaminyl-[protein] + H2O = L-glutamyl-[protein] + NH4(+). Probably deamidates glutamine residues to glutamate on methyl-accepting chemotaxis receptors (MCPs), playing an important role in chemotaxis. The protein is Probable chemoreceptor glutamine deamidase CheD of Rhizobium leguminosarum bv. trifolii (strain WSM2304).